Here is a 162-residue protein sequence, read N- to C-terminus: Ribose-5-phosphate isomerase B (162 aa).

D-ribulose 5-phosphate-binding positions include 11 to 12 and 70 to 74; these read DH and GSGNG. Glu-75 functions as the Proton acceptor in the catalytic mechanism. The Proton donor role is filled by His-102. Residues Asn-103, Arg-113, Arg-137, and Arg-141 each coordinate D-ribulose 5-phosphate.

It belongs to the LacAB/RpiB family. Homodimer.

It catalyses the reaction aldehydo-D-ribose 5-phosphate = D-ribulose 5-phosphate. It functions in the pathway carbohydrate degradation; pentose phosphate pathway; D-ribose 5-phosphate from D-ribulose 5-phosphate (non-oxidative stage): step 1/1. In terms of biological role, catalyzes the interconversion of ribulose-5-P and ribose-5-P. This Mycobacterium bovis (strain ATCC BAA-935 / AF2122/97) protein is Ribose-5-phosphate isomerase B.